An 84-amino-acid chain; its full sequence is Beta-cardiotoxin CTX21 (84 aa).

Residues 1-21 form the signal peptide; it reads MKTLLLTLVVVTIVCLDLGYT. 4 cysteine pairs are disulfide-bonded: cysteine 24/cysteine 43, cysteine 36/cysteine 61, cysteine 65/cysteine 76, and cysteine 77/cysteine 82.

This sequence belongs to the three-finger toxin family. Short-chain subfamily. Aminergic toxin sub-subfamily. Expressed by the venom gland.

It is found in the secreted. Functionally, acts as a beta-blocker by binding to beta-1 and beta-2 adrenergic receptors (ADRB1 and ADRB2). It dose-dependently decreases the heart rate (bradycardia), whereas conventional cardiotoxins increases it. At 100 mg/kg, intraperitoneal injection into mice provokes labored breathing, impaired locomotion, lack of response to external stimuli, and death (after 30 minutes). The sequence is that of Beta-cardiotoxin CTX21 from Ophiophagus hannah (King cobra).